The primary structure comprises 71 residues: MLQKHNKVKQTSVVRLMKYRGGHFGGGGLSTAIYSIFAFFSIPLWEKFMTFYLELFSILNNLVTSISKGIL.

Residues 24–44 (FGGGGLSTAIYSIFAFFSIPL) form a helical membrane-spanning segment.

It localises to the membrane. This is an uncharacterized protein from Schizosaccharomyces pombe (strain 972 / ATCC 24843) (Fission yeast).